Reading from the N-terminus, the 201-residue chain is Small ribosomal subunit protein uS5 (201 aa).

A disordered region spans residues 1–28; sequence MAGPQRRGSGAGGGERRDRKGRDGGASA. The segment covering 14–23 has biased composition (basic and acidic residues); sequence GERRDRKGRD. The S5 DRBM domain maps to 34–97; that stretch reads YVERVVAINR…EEAKKNFFKV (64 aa).

The protein belongs to the universal ribosomal protein uS5 family. As to quaternary structure, part of the 30S ribosomal subunit. Contacts proteins S4 and S8.

In terms of biological role, with S4 and S12 plays an important role in translational accuracy. Functionally, located at the back of the 30S subunit body where it stabilizes the conformation of the head with respect to the body. This chain is Small ribosomal subunit protein uS5, found in Streptomyces griseus subsp. griseus (strain JCM 4626 / CBS 651.72 / NBRC 13350 / KCC S-0626 / ISP 5235).